A 570-amino-acid chain; its full sequence is Sulfite reductase [NADPH] hemoprotein beta-component 1 (570 aa).

Cysteine 434, cysteine 440, cysteine 479, and cysteine 483 together coordinate [4Fe-4S] cluster. Position 483 (cysteine 483) interacts with siroheme.

This sequence belongs to the nitrite and sulfite reductase 4Fe-4S domain family. Alpha(8)-beta(8). The alpha component is a flavoprotein, the beta component is a hemoprotein. Siroheme serves as cofactor. The cofactor is [4Fe-4S] cluster.

The enzyme catalyses hydrogen sulfide + 3 NADP(+) + 3 H2O = sulfite + 3 NADPH + 4 H(+). It functions in the pathway sulfur metabolism; hydrogen sulfide biosynthesis; hydrogen sulfide from sulfite (NADPH route): step 1/1. Its function is as follows. Component of the sulfite reductase complex that catalyzes the 6-electron reduction of sulfite to sulfide. This is one of several activities required for the biosynthesis of L-cysteine from sulfate. The chain is Sulfite reductase [NADPH] hemoprotein beta-component 1 from Klebsiella pneumoniae (strain 342).